Here is a 208-residue protein sequence, read N- to C-terminus: Ras-related protein Rab-6B (208 aa).

GTP contacts are provided by residues 20–27 (GEQSVGKT), threonine 45, 68–72 (DTAGQ), and 126–129 (NKTD). Residues 42 to 50 (YQATIGIDF) carry the Effector region motif. 2 S-geranylgeranyl cysteine lipidation sites follow: cysteine 206 and cysteine 208. Cysteine 208 carries the post-translational modification Cysteine methyl ester.

Belongs to the small GTPase superfamily. Rab family. Interacts (GTP-bound) with BICD1 (via C-terminus); the interaction is direct. Interacts (GDP-bound) with DYNLRB1. Interacts (GTP-bound) with APBA1/MINT1. Interacts (GTP-bound) with VPS13B.

The protein localises to the golgi apparatus membrane. Its subcellular location is the endoplasmic reticulum-Golgi intermediate compartment. It localises to the cytoplasmic vesicle. It carries out the reaction GTP + H2O = GDP + phosphate + H(+). With respect to regulation, regulated by guanine nucleotide exchange factors (GEFs) which promote the exchange of bound GDP for free GTP, GTPase activating proteins (GAPs) which increase the GTP hydrolysis activity, and GDP dissociation inhibitors which inhibit the dissociation of the nucleotide from the GTPase. Functionally, the small GTPases Rab are key regulators of intracellular membrane trafficking, from the formation of transport vesicles to their fusion with membranes. Rabs cycle between active GTP-bound and inactive GDP-bound states. In their active state, drive transport of vesicular carriers from donor organelles to acceptor organelles to regulate the membrane traffic that maintains organelle identity and morphology. Recruits VPS13B to the Golgi membrane. Regulates the compacted morphology of the Golgi. Seems to have a role in retrograde membrane traffic at the level of the Golgi complex. May function in retrograde transport in neuronal cells. Plays a role in neuron projection development. The protein is Ras-related protein Rab-6B (RAB6B) of Bos taurus (Bovine).